Reading from the N-terminus, the 447-residue chain is Cytochrome c biogenesis protein CcsB (447 aa).

Transmembrane regions (helical) follow at residues L28–I48, T87–R107, and I173–A193.

This sequence belongs to the Ccs1/CcsB family. As to quaternary structure, may interact with CcsA.

The protein localises to the cellular thylakoid membrane. Functionally, required during biogenesis of c-type cytochromes (cytochrome c6 and cytochrome f) at the step of heme attachment. This Microcystis aeruginosa (strain NIES-843 / IAM M-2473) protein is Cytochrome c biogenesis protein CcsB.